A 552-amino-acid chain; its full sequence is MAGUK p55 subfamily member 2 (552 aa).

L27 domains lie at 8 to 59 and 60 to 118; these read SESA…EETK and LEAV…YETP. A Phosphoserine modification is found at S42. At T117 the chain carries Phosphothreonine. S121 carries the post-translational modification Phosphoserine. The region spanning 140–219 is the PDZ domain; that stretch reads MVGIRKTAGE…SVILKILPSY (80 aa). The 69-residue stretch at 225–293 folds into the SH3 domain; sequence PRQVFVKCHF…PSQLLEEKRK (69 aa). The Guanylate kinase-like domain occupies 350 to 537; it reads RKTLVLIGAQ…TFRELQTAME (188 aa).

Belongs to the MAGUK family. As to quaternary structure, can homomultimerise. Interacts with CACNG2. Interacts (via the SH3-Guanylate kinase-like sub-module) with DLG4/PSD95 and DLGAP1/GKAP. Interacts (via the PDZ domain) with CADM1 (via C-terminus). Interacts with KCNN2/SK2 (via N-terminal domain). Interacts with SRC. Phosphorylated by SRC. In terms of tissue distribution, expressed in hippocampal neurons.

The protein localises to the cell projection. It localises to the dendrite. Its subcellular location is the postsynaptic density. It is found in the cytoplasm. The protein resides in the cytoskeleton. The protein localises to the membrane. Functionally, postsynaptic MAGUK scaffold protein that links CADM1 cell adhesion molecules to core components of the postsynaptic density. In CA1 pyramidal neurons, required for synaptic KCNN2-containing channel function and long-term potentiation expression. Seems to negatively regulate SRC function in epithelial cells. This Rattus norvegicus (Rat) protein is MAGUK p55 subfamily member 2.